Reading from the N-terminus, the 508-residue chain is Photosystem II CP47 reaction center protein (508 aa).

Transmembrane regions (helical) follow at residues 21–36, 101–115, 140–156, 203–218, 237–252, and 457–472; these read SVHIMHTALVAGWAGS, IVFSGLCFLAAIWHW, GIHLFLAGLACFGFGAF, IAAGTLGILAGLFHLS, VLSSSIAAVFFAAFVV, and SFALLFFFGHIWHGSR.

The protein belongs to the PsbB/PsbC family. PsbB subfamily. PSII is composed of 1 copy each of membrane proteins PsbA, PsbB, PsbC, PsbD, PsbE, PsbF, PsbH, PsbI, PsbJ, PsbK, PsbL, PsbM, PsbT, PsbX, PsbY, PsbZ, Psb30/Ycf12, at least 3 peripheral proteins of the oxygen-evolving complex and a large number of cofactors. It forms dimeric complexes. The cofactor is Binds multiple chlorophylls. PSII binds additional chlorophylls, carotenoids and specific lipids..

The protein resides in the plastid. It localises to the chloroplast thylakoid membrane. One of the components of the core complex of photosystem II (PSII). It binds chlorophyll and helps catalyze the primary light-induced photochemical processes of PSII. PSII is a light-driven water:plastoquinone oxidoreductase, using light energy to abstract electrons from H(2)O, generating O(2) and a proton gradient subsequently used for ATP formation. This is Photosystem II CP47 reaction center protein from Helianthus annuus (Common sunflower).